The chain runs to 1376 residues: MDTSSVGTLELTDQTPVLLGSTAMATSLTNVGNSFSGPPNPLVSRSSKFQNSSVEDDDDVVFIEPVQPPPSSAPLVADQRPITFTSSKNEELQGNDPKILPSSKELAPQKGSVSETIVIDDEEDMETNQGQEKSSSNFIERRPSETKNRTNDVDFSSSTFSRSKVNAGVSNSGITTEPDSEIQIANVTTLETGVSSVSDGQLESTDGRDMNLMITHVTSLHNTSLGDGSNGLQSSNFGVNIQTYTPSLTSQTKAGVGPFNPGRMNVAGDVFQNGESAPHHNPDSWISQSASFPRNQKQQGVDSLSPVASLPKQIFQPSNQQPTKPVKVTCANCKKPLQKGQTAYQRKGSAHLFCSTTCLSSFSHKPAPKKLCVMCKKDITTMKGTIVAQVDSSESFQEFCSTSCLSLYEDKQSPAKGALNKSRCTICGKLTEIRHEVSFKNMTHKLCSDHCFNRYRMANGLIMNCCEQCGEYLPSKGAGNNVLVVDGQQKRFCCQSCVTEYKQVGSHPSFLKEVRDHMQDSFLMQPEKYGKLTTCTGCRTQCRFFDMTQCIGPNGYMEPYCSTACMNSHKTKYAKSQSLGIICHFCKRNSLPQYQATMPDGKLYNFCNSSCVAKFQALSMQSSPNGQFVAPSDIQLKCNYCKNSFCSKPEILEWENKVHQFCSKTCSDDYKKLHCIVTYCEYCQEEKTLHETVNFSGVKRPFCSEGCKLLYKQDFARRLGLRCVTCNYCSQLCKKGATKELDGVVRDFCSEDCCKKFQEWYYKAARCDCCKSQGTLKERVQWRGEMKHFCDQHCLLRFYCQQNEPNMTTQKGPENLHYDQGCQTSRTKMTGSAPPPSPTPNKEMKNKAILCKPLTMTKATYCKPHMQTKSCQTDENWKTEYVPVPIPVPVYVPVPMHMYSQNIPVPTTVPVPVPVPVFLPAPLDSSEKIPATVEDLKSKVSSDPLDSELLTMTDMMTEEEGKAEASNINSVIIETDIIGSDLTKNSDPDIQSNMPDVPYEPDLDIEIDFPRAAEELDMENEFLLPPVFGEEYEEQPRPRSKKKGTKRKAVSGYQSHDDSSDNSECSFPFKYTYGVNAWKHWVKTRQLDEDLLVLDELKSSKSVKLKEDLLSHTTAELNYGLAHFVNEIRRPNGENYAPDSIYYLCLGIQEYLCGSNRKDNIFIDPGYQMFEQELNKILRSWQPSILPDGSIFSRVEEDYLWRIKQLGSHSPVALLNTLFYFNTKYFGLKTVEQHLRLSFGTVFRHWKKNPLTMENKACLRYQVSSLCGTDNEDKIATGKRKHEDDEPVFEQVENTANPSRCPVKMFECYLSKSPQNLNQRMDVFYLQPECSSSTDSPVWYTSTSLDRNTLENMLVRVLLVKDIYDKDNYELDEDTD.

Over residues 30–53 (NVGNSFSGPPNPLVSRSSKFQNSS) the composition is skewed to polar residues. 2 disordered regions span residues 30–56 (NVGN…SVED) and 85–158 (TSSK…FSSS). Residues Lys-48, Lys-88, Lys-98, and Lys-104 each participate in a glycyl lysine isopeptide (Lys-Gly) (interchain with G-Cter in SUMO2) cross-link. Residues 127 to 138 (TNQGQEKSSSNF) are compositionally biased toward polar residues. Over residues 139–152 (IERRPSETKNRTND) the composition is skewed to basic and acidic residues. Glycyl lysine isopeptide (Lys-Gly) (interchain with G-Cter in SUMO2) cross-links involve residues Lys-147, Lys-253, and Lys-297. The segment at 269 to 304 (DVFQNGESAPHHNPDSWISQSASFPRNQKQQGVDSL) is disordered. Positions 284–302 (SWISQSASFPRNQKQQGVD) are enriched in polar residues. A Phosphoserine modification is found at Ser-305. Glycyl lysine isopeptide (Lys-Gly) (interchain with G-Cter in SUMO2) cross-links involve residues Lys-312, Lys-324, Lys-347, and Lys-365. The segment at 326 to 362 (VKVTCANCKKPLQKGQTAYQRKGSAHLFCSTTCLSSF) adopts an MYM-type 1 zinc-finger fold. The segment at 368 to 408 (PKKLCVMCKKDITTMKGTIVAQVDSSESFQEFCSTSCLSLY) adopts an MYM-type 2 zinc-finger fold. Residues Lys-416, Lys-440, Lys-490, Lys-502, Lys-512, Lys-528, and Lys-531 each participate in a glycyl lysine isopeptide (Lys-Gly) (interchain with G-Cter in SUMO2) cross-link. MYM-type zinc fingers lie at residues 420 to 455 (NKSR…FNRY) and 462 to 501 (IMNC…VTEY). The MYM-type 5 zinc finger occupies 532-569 (LTTCTGCRTQCRFFDMTQCIGPNGYMEPYCSTACMNSH). Residues Lys-575, Lys-602, Lys-648, Lys-657, Lys-687, Lys-699, and Lys-708 each participate in a glycyl lysine isopeptide (Lys-Gly) (interchain with G-Cter in SUMO2) cross-link. The MYM-type 6 zinc-finger motif lies at 635-670 (QLKCNYCKNSFCSKPEILEWENKVHQFCSKTCSDDY). 2 consecutive MYM-type zinc fingers follow at residues 722 to 757 (RCVT…CKKF) and 763 to 798 (KAAR…LLRF). Glycyl lysine isopeptide (Lys-Gly) (interchain with G-Cter in SUMO2) cross-links involve residues Lys-763, Lys-787, Lys-811, and Lys-828. Phosphoserine is present on Ser-837. Residues 1027–1063 (VFGEEYEEQPRPRSKKKGTKRKAVSGYQSHDDSSDNS) form a disordered region. Residues 1038-1049 (PRSKKKGTKRKA) show a composition bias toward basic residues. A Phosphoserine modification is found at Ser-1063. Phosphothreonine is present on Thr-1375.

As to quaternary structure, can form homodimers. May be a component of a BHC histone deacetylase complex that contains HDAC1, HDAC2, HMG20B/BRAF35, KDM1A, RCOR1/CoREST, PHF21A/BHC80, ZMYM2, ZNF217, ZMYM3, GSE1 and GTF2I. Interacts with FOXP1 and FOXP2. Low but widespread expression is detected in the developing kidney.

Its subcellular location is the nucleus. Involved in the negative regulation of transcription. This is Zinc finger MYM-type protein 2 (Zmym2) from Mus musculus (Mouse).